Here is a 113-residue protein sequence, read N- to C-terminus: UPF0482 protein KPN78578_15540 (113 aa).

Positions 1 to 28 are cleaved as a signal peptide; sequence MNMTLNKRWCLTAILALSAVVYTSSSYA. Positions 38–60 are disordered; sequence GDSAQSRQQASMEKEQWNDTRSL. Residues 39–48 show a composition bias toward polar residues; the sequence is DSAQSRQQAS. Over residues 49-59 the composition is skewed to basic and acidic residues; the sequence is MEKEQWNDTRS.

This sequence belongs to the UPF0482 family.

The sequence is that of UPF0482 protein KPN78578_15540 from Klebsiella pneumoniae subsp. pneumoniae (strain ATCC 700721 / MGH 78578).